The sequence spans 579 residues: Protein disulfide isomerase-like 1-3 (579 aa).

An N-terminal signal peptide occupies residues 1-25; the sequence is MASSSTSISLLLFVSFILLLVNSRA. N27 carries N-linked (GlcNAc...) asparagine glycosylation. Composition is skewed to basic and acidic residues over residues 44-69 and 80-89; these read EESK…RDFE and EFHHGDHGYE. The tract at residues 44-91 is disordered; it reads EESKEQSHGGGSYHEEEHDHQHRDFENYDDLEQGGGEFHHGDHGYEEE. The region spanning 81-204 is the Thioredoxin 1 domain; sequence FHHGDHGYEE…IVTWLKKKAS (124 aa). N-linked (GlcNAc...) asparagine glycans are attached at residues N108 and N115. Residues C128 and C131 each act as nucleophile in the active site. An intrachain disulfide couples C128 to C131. N-linked (GlcNAc...) asparagine glycosylation is found at N209, N293, N313, and N338. The Thioredoxin 2 domain occupies 416-546; it reads DFLADKLKPF…LYKFLKKHAS (131 aa). Active-site nucleophile residues include C467 and C470. A disulfide bridge connects residues C467 and C470. N520 carries an N-linked (GlcNAc...) asparagine glycan. Positions 558-579 are disordered; that stretch reads EPVISTMKSDEKIEGDSSKDEL. The segment covering 565–579 has biased composition (basic and acidic residues); that stretch reads KSDEKIEGDSSKDEL. The Prevents secretion from ER motif lies at 576 to 579; the sequence is KDEL.

It belongs to the protein disulfide isomerase family. In terms of tissue distribution, widely expressed.

The protein resides in the endoplasmic reticulum lumen. The catalysed reaction is Catalyzes the rearrangement of -S-S- bonds in proteins.. Functionally, acts as a protein-folding catalyst that interacts with nascent polypeptides to catalyze the formation, isomerization, and reduction or oxidation of disulfide bonds. This is Protein disulfide isomerase-like 1-3 (PDIL1-3) from Arabidopsis thaliana (Mouse-ear cress).